The sequence spans 123 residues: Small ribosomal subunit protein uS12 (123 aa).

3-methylthioaspartic acid is present on aspartate 89. Residues 100 to 123 (GSLDTSGVKGRNQGRSKYGTKKPK) are disordered. The span at 111-123 (NQGRSKYGTKKPK) shows a compositional bias: basic residues.

This sequence belongs to the universal ribosomal protein uS12 family. In terms of assembly, part of the 30S ribosomal subunit. Contacts proteins S8 and S17. May interact with IF1 in the 30S initiation complex.

Functionally, with S4 and S5 plays an important role in translational accuracy. Interacts with and stabilizes bases of the 16S rRNA that are involved in tRNA selection in the A site and with the mRNA backbone. Located at the interface of the 30S and 50S subunits, it traverses the body of the 30S subunit contacting proteins on the other side and probably holding the rRNA structure together. The combined cluster of proteins S8, S12 and S17 appears to hold together the shoulder and platform of the 30S subunit. The sequence is that of Small ribosomal subunit protein uS12 from Pseudomonas syringae pv. syringae (strain B728a).